Here is a 100-residue protein sequence, read N- to C-terminus: MAKKSLIAREKKRKKLEEKFYLIRRYPTKEMSKGGSLSESWEIQGKLEALPRNSAPTRLHRRCFLTGRPRANVRDFGLSGHILREMVHICLLPGATRSSW.

Belongs to the universal ribosomal protein uS14 family. As to quaternary structure, part of the 30S ribosomal subunit.

The protein resides in the plastid. The protein localises to the chloroplast. Binds 16S rRNA, required for the assembly of 30S particles. The polypeptide is Small ribosomal subunit protein uS14c (Pisum sativum (Garden pea)).